Consider the following 242-residue polypeptide: Probable pectate lyase D (242 aa).

The signal sequence occupies residues 1–17; sequence MYQKSLLFSLLASSALA. Asn-216 carries an N-linked (GlcNAc...) asparagine glycan. The segment at 217 to 242 is disordered; that stretch reads DTGAEPEEISEGPSDACQYSEPLSSC.

The protein belongs to the polysaccharide lyase 3 family. It depends on Ca(2+) as a cofactor.

Its subcellular location is the secreted. It catalyses the reaction Eliminative cleavage of (1-&gt;4)-alpha-D-galacturonan to give oligosaccharides with 4-deoxy-alpha-D-galact-4-enuronosyl groups at their non-reducing ends.. Pectinolytic enzyme consist of four classes of enzymes: pectin lyase, polygalacturonase, pectin methylesterase and rhamnogalacturonase. Among pectinolytic enzymes, pectin lyase is the most important in depolymerization of pectin, since it cleaves internal glycosidic bonds of highly methylated pectins. Favors pectate, the anion, over pectin, the methyl ester. The protein is Probable pectate lyase D (plyD) of Aspergillus fumigatus (strain CBS 144.89 / FGSC A1163 / CEA10) (Neosartorya fumigata).